The primary structure comprises 412 residues: Protein ALF (412 aa).

Disordered stretches follow at residues 1-47 (MDPE…PLPP) and 154-234 (GLSE…GISE). Over residues 31–47 (PPQPPPPPLPPPQPLPP) the composition is skewed to pro residues. The span at 187–196 (MRQRRRKKVV) shows a compositional bias: basic residues. The segment covering 206-221 (MEEDEDTEEGQEDNED) has biased composition (acidic residues). 3 consecutive DNA-binding regions follow at residues 237 to 241 (REHPF), 306 to 313 (NKPKMRHY), and 377 to 380 (YVPT).

The protein belongs to the FLO/LFY family. As to expression, expressed in the floral meristem and also in the vegetative meristem.

It is found in the nucleus. Functionally, probable transcription factor required for the specification of floral meristem identity. The polypeptide is Protein ALF (ALF) (Petunia hybrida (Petunia)).